A 206-amino-acid chain; its full sequence is VEL1-related protein SCY_5430 (206 aa).

A signal peptide spans 1–19 (MSFLNIFTFFSVLVSVATA).

This sequence belongs to the VEL1 family.

The protein localises to the cytoplasm. The protein resides in the cytosol. The chain is VEL1-related protein SCY_5430 from Saccharomyces cerevisiae (strain YJM789) (Baker's yeast).